We begin with the raw amino-acid sequence, 124 residues long: Orexigenic neuropeptide QRFP (124 aa).

Positions 1 to 17 (MRGFRPLLSLLLPLSAC) are cleaved as a signal peptide. Residues 18 to 79 (FPLLDRRGPT…REHTGFRLGR (62 aa)) constitute a propeptide that is removed on maturation. The interval 63-101 (REQQASHREHTGFRLGRQDGSSEAAGFLPADSEKASGPL) is disordered. Phe122 is modified (phenylalanine amide).

It belongs to the RFamide neuropeptide family. In terms of assembly, ligand for the G-protein coupled receptor QRFPR/GPR103. Expressed in the brain with highest levels in the periventricular hypothalamic nucleus and lateral hypothalamic areas. Expressed at moderate levels in the adrenal gland, eye, heart, intestine, liver, lung, kidney, mesenteric lymph node, ovary, placenta, Peyer patches, skin, spleen, stomach, testis, thymus and uterus.

The protein resides in the secreted. Stimulates feeding and grooming behavior, metabolic rate and locomotor activity and increases blood pressure. May have orexigenic activity. May promote aldosterone secretion by the adrenal gland. The polypeptide is Orexigenic neuropeptide QRFP (Mus musculus (Mouse)).